The chain runs to 184 residues: Large ribosomal subunit protein uL6 (184 aa).

This sequence belongs to the universal ribosomal protein uL6 family. Part of the 50S ribosomal subunit.

This protein binds to the 23S rRNA, and is important in its secondary structure. It is located near the subunit interface in the base of the L7/L12 stalk, and near the tRNA binding site of the peptidyltransferase center. In Pyrococcus abyssi (strain GE5 / Orsay), this protein is Large ribosomal subunit protein uL6.